Here is a 517-residue protein sequence, read N- to C-terminus: Gallate 1-beta-glucosyltransferase 84A24 (517 aa).

The Proton acceptor role is filled by His19. An anthocyanidin is bound at residue His19. Residues Gln344, His359, Trp362, Asn363, Ser364, and Glu367 each coordinate UDP-alpha-D-glucose. Gly382 provides a ligand contact to an anthocyanidin. Residues Asp383 and Gln384 each coordinate UDP-alpha-D-glucose.

The protein belongs to the UDP-glycosyltransferase family. In terms of tissue distribution, highly expressed in leaf. Also expressed in peel, stem, root and aril.

The protein resides in the cytoplasm. The enzyme catalyses 3,4,5-trihydroxybenzoate + UDP-alpha-D-glucose = 1-O-galloyl-beta-D-glucose + UDP. It carries out the reaction 3,4-dihydroxybenzoate + UDP-alpha-D-glucose = 1-O-(3,4-dihydroxy-benzoyl)-beta-D-glucose + UDP. It catalyses the reaction 4-hydroxybenzoate + UDP-alpha-D-glucose = 4-(beta-D-glucosyloxy)benzoate + UDP + H(+). The catalysed reaction is (E)-cinnamate + UDP-alpha-D-glucose = 1-O-(trans-cinnamoyl)-beta-D-glucose + UDP. The enzyme catalyses (E)-sinapate + UDP-alpha-D-glucose = 1-O-(trans-sinapoyl)-beta-D-glucose + UDP. It carries out the reaction (E)-4-coumarate + UDP-alpha-D-glucose = 1-O-(trans-4-coumaroyl)-beta-D-glucose + UDP. It catalyses the reaction (E)-caffeate + UDP-alpha-D-glucose = 1-O-[(E)-caffeoyl]-beta-D-glucose + UDP. The catalysed reaction is (E)-ferulate + UDP-alpha-D-glucose = 1-O-[(E)-feruloyl]-beta-D-glucose + UDP. The enzyme catalyses genistein + UDP-alpha-D-glucose = genistein 7-O-beta-D-glucoside + UDP + H(+). It carries out the reaction apigenin + UDP-alpha-D-glucose = apigenin 7-O-beta-D-glucoside + UDP + H(+). It catalyses the reaction luteolin + UDP-alpha-D-glucose = luteolin 7-O-beta-D-glucoside + UDP + H(+). Functionally, glucosyltransferase that catalyzes the formation of 1-O-beta-D-glucose esters with hydroxybenzoic acids and cinnamic acid including its derivatives as preferred glucosyl acceptors. Has significant activity with gallic acid (3,4,5-trihydroxybenzoic acid), 3,4-dihydroxybenzoic acid, 4-hydroxybenzoic acid, cinnamic acid, sinapic acid, coumaric acid, caffeic acid and ferulic acid in vitro. Gallic acid is the predicted native substrate of the enzyme, which thus catalyzes the formation of 1-O-galloyl-beta-D-glucose, the first committed step of hydrolyzable tannins (HTs) biosynthesis, with punicalagin isomers being the major HTs of pomegranate. Catalyzes the formation of flavonoid glucosides with genistein, apigenin and luteolin in vitro. Has low activity with benzoic acid, 2-hydroxybenzoic acid, 3-hydroxybenzoic acid, 2,4-dihydroxybenzoic acid, naringenin and quercetin. No activity with catechol, resveratrol, chlorogenic acid, catechin and epicatechin (building blocks of proanthocyanidins) or cyanidin, delphinidin and pelargonidin (the three anthocyanidins). This is Gallate 1-beta-glucosyltransferase 84A24 from Punica granatum (Pomegranate).